A 68-amino-acid chain; its full sequence is MAQMKIEDIRAMSPDQQDDAILNLKKERFNLRFQRATGQLENTSRLREARRDIARIKTVAAQTRAKKK.

It belongs to the universal ribosomal protein uL29 family.

The polypeptide is Large ribosomal subunit protein uL29 (Bradyrhizobium diazoefficiens (strain JCM 10833 / BCRC 13528 / IAM 13628 / NBRC 14792 / USDA 110)).